The following is a 340-amino-acid chain: UDP-3-O-acylglucosamine N-acyltransferase (340 aa).

His-247 (proton acceptor) is an active-site residue.

Belongs to the transferase hexapeptide repeat family. LpxD subfamily. As to quaternary structure, homotrimer.

The catalysed reaction is a UDP-3-O-[(3R)-3-hydroxyacyl]-alpha-D-glucosamine + a (3R)-hydroxyacyl-[ACP] = a UDP-2-N,3-O-bis[(3R)-3-hydroxyacyl]-alpha-D-glucosamine + holo-[ACP] + H(+). It participates in bacterial outer membrane biogenesis; LPS lipid A biosynthesis. Its function is as follows. Catalyzes the N-acylation of UDP-3-O-acylglucosamine using 3-hydroxyacyl-ACP as the acyl donor. Is involved in the biosynthesis of lipid A, a phosphorylated glycolipid that anchors the lipopolysaccharide to the outer membrane of the cell. This chain is UDP-3-O-acylglucosamine N-acyltransferase, found in Caulobacter sp. (strain K31).